We begin with the raw amino-acid sequence, 173 residues long: dCTP deaminase, dUMP-forming (173 aa).

DCTP-binding positions include 93-98, Asp-111, 119-121, Gln-138, and Tyr-151; these read RSSIGR and TLE. Glu-121 (proton donor/acceptor) is an active-site residue.

Belongs to the dCTP deaminase family. In terms of assembly, homotrimer.

It catalyses the reaction dCTP + 2 H2O = dUMP + NH4(+) + diphosphate. It functions in the pathway pyrimidine metabolism; dUMP biosynthesis; dUMP from dCTP: step 1/1. Its function is as follows. Bifunctional enzyme that catalyzes both the deamination of dCTP to dUTP and the hydrolysis of dUTP to dUMP without releasing the toxic dUTP intermediate. This Clostridium acetobutylicum (strain ATCC 824 / DSM 792 / JCM 1419 / IAM 19013 / LMG 5710 / NBRC 13948 / NRRL B-527 / VKM B-1787 / 2291 / W) protein is dCTP deaminase, dUMP-forming.